A 1551-amino-acid polypeptide reads, in one-letter code: Pentafunctional AROM polypeptide 1 (1551 aa).

The interval 1 to 379 (MSIEKVSILG…YESKAHQIFK (379 aa)) is 3-dehydroquinate synthase. NAD(+) contacts are provided by residues 42 to 44 (DTN), 80 to 83 (ENHK), 111 to 113 (GGV), and Asp-116. Arg-127 contributes to the 7-phospho-2-dehydro-3-deoxy-D-arabino-heptonate binding site. Residue 136 to 137 (TT) participates in NAD(+) binding. The 7-phospho-2-dehydro-3-deoxy-D-arabino-heptonate site is built by Asp-143 and Lys-149. Position 158 (Lys-158) interacts with NAD(+). Asn-159 contributes to the 7-phospho-2-dehydro-3-deoxy-D-arabino-heptonate binding site. NAD(+)-binding positions include 176-179 (FLQT) and Asn-187. Residue Glu-191 participates in Zn(2+) binding. 7-phospho-2-dehydro-3-deoxy-D-arabino-heptonate is bound by residues 191 to 194 (EVVK) and Lys-243. The Proton acceptor; for 3-dehydroquinate synthase activity role is filled by Glu-253. Residues 257-261 (RNLLN) and His-264 contribute to the 7-phospho-2-dehydro-3-deoxy-D-arabino-heptonate site. Residue His-264 coordinates Zn(2+). His-268 functions as the Proton acceptor; for 3-dehydroquinate synthase activity in the catalytic mechanism. 2 residues coordinate 7-phospho-2-dehydro-3-deoxy-D-arabino-heptonate: His-280 and Lys-351. His-280 is a Zn(2+) binding site. Residues 392–835 (VHPFANRHPE…WDVLHSKFNA (444 aa)) form an EPSP synthase region. The shikimate kinase stretch occupies residues 854-1044 (DRSIVIIGMR…LPATRSTFVT (191 aa)). 861–868 (GMRAAGKT) lines the ATP pocket. A 3-dehydroquinase region spans residues 1045-1258 (LTYPDLRKVP…IGVGQLSLKE (214 aa)). The Proton acceptor; for 3-dehydroquinate dehydratase activity role is filled by His-1162. The active-site Schiff-base intermediate with substrate; for 3-dehydroquinate dehydratase activity is the Lys-1191. The shikimate dehydrogenase stretch occupies residues 1271-1551 (EKEFWVVGSP…KVIHSAVLNE (281 aa)).

The protein in the N-terminal section; belongs to the sugar phosphate cyclases superfamily. Dehydroquinate synthase family. It in the 2nd section; belongs to the EPSP synthase family. This sequence in the 3rd section; belongs to the shikimate kinase family. In the 4th section; belongs to the type-I 3-dehydroquinase family. The protein in the C-terminal section; belongs to the shikimate dehydrogenase family. As to quaternary structure, homodimer. Zn(2+) serves as cofactor.

It localises to the cytoplasm. It catalyses the reaction 7-phospho-2-dehydro-3-deoxy-D-arabino-heptonate = 3-dehydroquinate + phosphate. The catalysed reaction is 3-dehydroquinate = 3-dehydroshikimate + H2O. The enzyme catalyses shikimate + NADP(+) = 3-dehydroshikimate + NADPH + H(+). It carries out the reaction shikimate + ATP = 3-phosphoshikimate + ADP + H(+). It catalyses the reaction 3-phosphoshikimate + phosphoenolpyruvate = 5-O-(1-carboxyvinyl)-3-phosphoshikimate + phosphate. It participates in metabolic intermediate biosynthesis; chorismate biosynthesis; chorismate from D-erythrose 4-phosphate and phosphoenolpyruvate: step 2/7. The protein operates within metabolic intermediate biosynthesis; chorismate biosynthesis; chorismate from D-erythrose 4-phosphate and phosphoenolpyruvate: step 3/7. It functions in the pathway metabolic intermediate biosynthesis; chorismate biosynthesis; chorismate from D-erythrose 4-phosphate and phosphoenolpyruvate: step 4/7. Its pathway is metabolic intermediate biosynthesis; chorismate biosynthesis; chorismate from D-erythrose 4-phosphate and phosphoenolpyruvate: step 5/7. It participates in metabolic intermediate biosynthesis; chorismate biosynthesis; chorismate from D-erythrose 4-phosphate and phosphoenolpyruvate: step 6/7. In terms of biological role, the AROM polypeptide catalyzes 5 consecutive enzymatic reactions in prechorismate polyaromatic amino acid biosynthesis. The sequence is that of Pentafunctional AROM polypeptide 1 from Lodderomyces elongisporus (strain ATCC 11503 / CBS 2605 / JCM 1781 / NBRC 1676 / NRRL YB-4239) (Yeast).